The sequence spans 3165 residues: Protein eyes shut homolog (3165 aa).

The first 21 residues, 1–21 (MTDKSIIILSLMVFHSSFING), serve as a signal peptide directing secretion. Residues asparagine 42, asparagine 105, asparagine 117, and asparagine 166 are each glycosylated (N-linked (GlcNAc...) asparagine). EGF-like domains are found at residues 170–212 (KQQF…KYCQ), 213–254 (ELDA…KNCS), and 256–292 (IIVQ…PFCE). 9 disulfide bridges follow: cysteine 174–cysteine 189, cysteine 183–cysteine 200, cysteine 202–cysteine 211, cysteine 217–cysteine 228, cysteine 222–cysteine 242, cysteine 244–cysteine 253, cysteine 260–cysteine 270, cysteine 265–cysteine 280, and cysteine 282–cysteine 291. N-linked (GlcNAc...) asparagine glycans are attached at residues asparagine 252, asparagine 269, and asparagine 272. 2 N-linked (GlcNAc...) asparagine glycosylation sites follow: asparagine 311 and asparagine 343. EGF-like domains follow at residues 332–368 (DVSE…LLCK) and 370–406 (FQTS…KNCE). 2 cysteine pairs are disulfide-bonded: cysteine 341–cysteine 356 and cysteine 358–cysteine 367. Asparagine 382 carries N-linked (GlcNAc...) asparagine glycosylation. Cysteine 396 and cysteine 405 are joined by a disulfide. Asparagine 506, asparagine 520, asparagine 521, asparagine 566, and asparagine 573 each carry an N-linked (GlcNAc...) asparagine glycan. EGF-like domains are found at residues 566 to 602 (NITD…RLCV), 604 to 641 (NVDY…NICE), and 643 to 679 (DIED…TRCE). 2 cysteine pairs are disulfide-bonded: cysteine 592/cysteine 601 and cysteine 608/cysteine 620. 2 N-linked (GlcNAc...) asparagine glycosylation sites follow: asparagine 611 and asparagine 628. An intrachain disulfide couples cysteine 629 to cysteine 640. Asparagine 654 carries N-linked (GlcNAc...) asparagine glycosylation. Intrachain disulfides connect cysteine 669-cysteine 678, cysteine 685-cysteine 696, cysteine 690-cysteine 705, and cysteine 707-cysteine 719. An EGF-like 9; calcium-binding domain is found at 681–720 (DLDECALHPCKSGATCIDQPGNYFCQCGPPFKVVDGFSCL). Positions 733–769 (NIDNCILNAFEHNSTYKDLHLSYQCVCLSGWEGNFCE) constitute an EGF-like 10 domain. N-linked (GlcNAc...) asparagine glycosylation occurs at asparagine 745. Cystine bridges form between cysteine 759-cysteine 768, cysteine 775-cysteine 786, cysteine 780-cysteine 795, cysteine 797-cysteine 806, cysteine 813-cysteine 824, cysteine 818-cysteine 835, cysteine 837-cysteine 846, cysteine 853-cysteine 866, cysteine 860-cysteine 876, cysteine 878-cysteine 887, cysteine 894-cysteine 905, cysteine 899-cysteine 914, cysteine 916-cysteine 925, cysteine 932-cysteine 943, cysteine 937-cysteine 952, cysteine 954-cysteine 963, cysteine 970-cysteine 981, cysteine 975-cysteine 990, cysteine 992-cysteine 1001, cysteine 1008-cysteine 1019, cysteine 1013-cysteine 1028, cysteine 1030-cysteine 1039, cysteine 1046-cysteine 1056, cysteine 1051-cysteine 1065, cysteine 1067-cysteine 1076, cysteine 1083-cysteine 1094, cysteine 1088-cysteine 1103, cysteine 1105-cysteine 1114, cysteine 1121-cysteine 1137, cysteine 1131-cysteine 1147, cysteine 1149-cysteine 1158, cysteine 1165-cysteine 1176, cysteine 1170-cysteine 1185, and cysteine 1187-cysteine 1196. The region spanning 771–807 (ESNECKMNPCKNNSTCTDLYKSYRCECTSGWTGQNCS) is the EGF-like 11; calcium-binding domain. 3 N-linked (GlcNAc...) asparagine glycosylation sites follow: asparagine 782, asparagine 783, and asparagine 805. 3 EGF-like domains span residues 809 to 847 (EINE…QFCH), 849 to 888 (RYNP…KHCE), and 890 to 926 (DVKE…SLCE). Asparagine 862 and asparagine 863 each carry an N-linked (GlcNAc...) asparagine glycan. Residues 928–964 (EINECSSEPCKNNGTCVDLTNRFFCNCEPGYHGPFCE) form the EGF-like 15; calcium-binding domain. Asparagine 940 carries an N-linked (GlcNAc...) asparagine glycan. An EGF-like 16 domain is found at 966–1002 (EVNKCKISPCLDEENCVYRTDRYNCLCAPGYTGINCE). Positions 1004 to 1040 (NLDECLSEPCLHDGVCIDGINHYTCDCKSGFFGTHCE) constitute an EGF-like 17; calcium-binding domain. EGF-like domains are found at residues 1042-1077 (NAND…IQCK), 1079-1115 (KIND…AYCE), and 1117-1159 (SIDN…QFCE). The EGF-like 21; calcium-binding domain occupies 1161–1197 (NINECSSSPCLHGANCEDHINGYVCKCQPGWSGHHCE). 4 N-linked (GlcNAc...) asparagine glycosylation sites follow: asparagine 1509, asparagine 1906, asparagine 1941, and asparagine 2033. One can recognise a Laminin G-like 1 domain in the interval 1883-2063 (FSCVCYYGDS…AVRNYHINNC (181 aa)). Intrachain disulfides connect cysteine 2037–cysteine 2063, cysteine 2103–cysteine 2114, cysteine 2108–cysteine 2128, and cysteine 2130–cysteine 2139. In terms of domain architecture, EGF-like 22 spans 2099 to 2140 (APSVCQEDVCHNGGTCRPIFLSSGIVSFQCDCPLHFTGRFCE). A Laminin G-like 2 domain is found at 2145–2339 (LFFPSFSGNS…NIENCHVPWC (195 aa)). N-linked (GlcNAc...) asparagine glycans are attached at residues asparagine 2170, asparagine 2185, and asparagine 2228. Disulfide bonds link cysteine 2308–cysteine 2339, cysteine 2339–cysteine 2350, cysteine 2344–cysteine 2359, cysteine 2375–cysteine 2386, cysteine 2380–cysteine 2396, and cysteine 2398–cysteine 2407. EGF-like domains lie at 2335–2368 (HVPW…YSGK) and 2371–2408 (QFAS…PLCT). Asparagine 2347 is a glycosylation site (N-linked (GlcNAc...) asparagine). Asparagine 2412, asparagine 2453, asparagine 2484, asparagine 2506, and asparagine 2532 each carry an N-linked (GlcNAc...) asparagine glycan. The Laminin G-like 3 domain maps to 2419–2609 (SGTDAFGYTS…PNAGRSVGQC (191 aa)). 3 cysteine pairs are disulfide-bonded: cysteine 2576/cysteine 2609, cysteine 2614/cysteine 2625, and cysteine 2619/cysteine 2634. EGF-like domains follow at residues 2610–2646 (HASP…AFCT) and 2648–2689 (TVSI…IYCE). Residue asparagine 2635 is glycosylated (N-linked (GlcNAc...) asparagine). 4 disulfides stabilise this stretch: cysteine 2636/cysteine 2645, cysteine 2652/cysteine 2668, cysteine 2662/cysteine 2677, and cysteine 2679/cysteine 2688. Positions 2717-2895 (DPSFRSSELS…AKGGSNVGDC (179 aa)) constitute a Laminin G-like 4 domain. 3 N-linked (GlcNAc...) asparagine glycosylation sites follow: asparagine 2775, asparagine 2800, and asparagine 2824. 4 disulfides stabilise this stretch: cysteine 2868-cysteine 2895, cysteine 2900-cysteine 2911, cysteine 2905-cysteine 2920, and cysteine 2922-cysteine 2931. EGF-like domains are found at residues 2896–2932 (DGTA…NICN) and 2933–2970 (QSAY…RYCE). Asparagine 2914 is a glycosylation site (N-linked (GlcNAc...) asparagine). N-linked (GlcNAc...) asparagine glycosylation occurs at asparagine 2932. Disulfide bonds link cysteine 2937/cysteine 2948, cysteine 2942/cysteine 2958, and cysteine 2960/cysteine 2969. N-linked (GlcNAc...) asparagine glycans are attached at residues asparagine 2971, asparagine 3006, asparagine 3036, asparagine 3057, asparagine 3073, and asparagine 3082. Residues 2975-3165 (FTTAKFMGNS…YDGDEQNEVT (191 aa)) enclose the Laminin G-like 5 domain.

It belongs to the EYS family. In terms of tissue distribution, expressed in retina (at protein level).

The protein resides in the cell projection. It is found in the cilium. The protein localises to the photoreceptor outer segment. Its subcellular location is the cytoplasm. It localises to the cytoskeleton. The protein resides in the cilium axoneme. It is found in the microtubule organizing center. The protein localises to the centrosome. Its subcellular location is the secreted. It localises to the extracellular space. The protein resides in the extracellular matrix. It is found in the interphotoreceptor matrix. Functionally, required to maintain the integrity of photoreceptor cells. Specifically required for normal morphology of the photoreceptor ciliary pocket, and might thus facilitate protein trafficking between the photoreceptor inner and outer segments via the transition zone. This Macaca fascicularis (Crab-eating macaque) protein is Protein eyes shut homolog.